A 208-amino-acid chain; its full sequence is Small ribosomal subunit protein uS4 (208 aa).

The S4 RNA-binding domain maps to 98–163 (QRLDNVVYRM…NPQITRAIEL (66 aa)).

It belongs to the universal ribosomal protein uS4 family. Part of the 30S ribosomal subunit. Contacts protein S5. The interaction surface between S4 and S5 is involved in control of translational fidelity.

One of the primary rRNA binding proteins, it binds directly to 16S rRNA where it nucleates assembly of the body of the 30S subunit. In terms of biological role, with S5 and S12 plays an important role in translational accuracy. This Campylobacter jejuni (strain RM1221) protein is Small ribosomal subunit protein uS4.